The following is an 822-amino-acid chain: Lysine-specific histone demethylase 2 (822 aa).

Residues 1–11 (MATPRGRTKKK) show a composition bias toward basic residues. The segment at 1 to 47 (MATPRGRTKKKASFDHSPDSLPLRSSGRQAKKKATETTDEDEDGGSE) is disordered. A phosphoserine mark is found at Ser13, Ser17, and Ser26. Residues Cys53, Cys58, Cys65, Cys73, His84, His90, Cys92, Cys95, Cys142, Cys147, Cys169, and Cys185 each coordinate Zn(2+). The CW-type zinc-finger motif lies at 133-193 (DQQLPYWVQC…HCSLPEDLRV (61 aa)). Ser247 carries the post-translational modification Phosphoserine. The segment at 273–292 (YQPNECGKALCVRPDVMELD) is GLYR1-binding. Residues 275 to 373 (PNECGKALCV…TGVLSVGADQ (99 aa)) enclose the SWIRM domain. An FAD-binding site is contributed by 383 to 439 (KSVIIIGAGPAGLAAARQLHNFGIKVTVLEAKDRIGGRVWDDKSFKGVTVGRGAQIV). Histone H3-binding regions lie at residues 438-467 (IVNG…RCDL), 487-498 (FNALLDVVSEWR), and 538-572 (FHLS…AGDH). The interval 564-566 (FFA) is GLYR1-binding. FAD is bound by residues Val598, Glu795, and 803–805 (QTV). Positions 798-814 (NRHFPQTVTGAYLSGVR) are GLYR1-binding.

The protein belongs to the flavin monoamine oxidase family. As to quaternary structure, interacts with its cofactor GLYR1 at nucleosomes; this interaction stimulates H3K4me1 and H3K4me2 demethylation. In contrast to KDM1A, does not form a complex with RCOR1/CoREST. Possible accessory component of the polycomb repressive deubiquitinase (PR-DUB) complex, at least composed of BAP1, one of ASXL1, ASXL2 or (probably) ASXL3 and one of MBD5 or MBD6. The PR-DUB core associates with a number of accessory proteins, including FOXK1, FOXK2, KDM1B, HCFC1 and OGT; KDM1B specifically associates with ASXL2 PR-DUB complexes. FAD is required as a cofactor. Zn(2+) serves as cofactor.

The protein localises to the nucleus. It localises to the chromosome. The catalysed reaction is N(6),N(6)-dimethyl-L-lysyl(4)-[histone H3] + 2 A + 2 H2O = L-lysyl(4)-[histone H3] + 2 formaldehyde + 2 AH2. It catalyses the reaction N(6)-methyl-L-lysyl(4)-[histone H3] + A + H2O = L-lysyl(4)-[histone H3] + formaldehyde + AH2. Histone H3K4me1 and H3K4me2 demethylase activity is inhibited by DNA, this inhibition is released in complex with GLYR1. Histone demethylase that demethylates 'Lys-4' of histone H3, a specific tag for epigenetic transcriptional activation, thereby acting as a corepressor. Required for de novo DNA methylation of a subset of imprinted genes during oogenesis. Acts by oxidizing the substrate by FAD to generate the corresponding imine that is subsequently hydrolyzed. Demethylates both mono- and di-methylated 'Lys-4' of histone H3. Has no effect on tri-methylated 'Lys-4', mono-, di- or tri-methylated 'Lys-9', mono-, di- or tri-methylated 'Lys-27', mono-, di- or tri-methylated 'Lys-36' of histone H3, or on mono-, di- or tri-methylated 'Lys-20' of histone H4. Alone, it is unable to demethylate H3K4me on nucleosomes and requires the presence of GLYR1 to achieve such activity, they form a multifunctional enzyme complex that modifies transcribed chromatin and facilitates Pol II transcription through nucleosomes. This is Lysine-specific histone demethylase 2 from Homo sapiens (Human).